A 153-amino-acid chain; its full sequence is Small ribosomal subunit protein bS6 (153 aa).

A disordered region spans residues 94–153 (EAHEEGPSAMMQKRDRDDRPRRDGDRPDRGPREDRGPRPPREGGFGDREDRPRRPREDRA).

It belongs to the bacterial ribosomal protein bS6 family.

Functionally, binds together with bS18 to 16S ribosomal RNA. The protein is Small ribosomal subunit protein bS6 of Agrobacterium fabrum (strain C58 / ATCC 33970) (Agrobacterium tumefaciens (strain C58)).